Reading from the N-terminus, the 399-residue chain is Glycerate 2-kinase (399 aa).

Position 48 (lysine 48) interacts with substrate.

It belongs to the glycerate kinase type-1 family. Homodimer. It depends on Mg(2+) as a cofactor. Ni(2+) serves as cofactor. Mn(2+) is required as a cofactor. Requires Co(2+) as cofactor. The cofactor is Ca(2+). It depends on Zn(2+) as a cofactor. Sr(2+) serves as cofactor.

The catalysed reaction is (R)-glycerate + ATP = (2R)-2-phosphoglycerate + ADP + H(+). In terms of biological role, catalyzes the ATP-dependent phosphorylation of D-glycerate to 2-phosphoglycerate. It can also utilize GTP, CTP, UTP, ADP, AMP or pyrophosphate as phosphate donor. In Sulfurisphaera tokodaii (strain DSM 16993 / JCM 10545 / NBRC 100140 / 7) (Sulfolobus tokodaii), this protein is Glycerate 2-kinase (gck).